Here is a 279-residue protein sequence, read N- to C-terminus: Putative pyruvate, phosphate dikinase regulatory protein (279 aa).

Position 153–160 (153–160 (GISRTSKT)) interacts with ADP.

This sequence belongs to the pyruvate, phosphate/water dikinase regulatory protein family. PDRP subfamily.

It carries out the reaction N(tele)-phospho-L-histidyl/L-threonyl-[pyruvate, phosphate dikinase] + ADP = N(tele)-phospho-L-histidyl/O-phospho-L-threonyl-[pyruvate, phosphate dikinase] + AMP + H(+). It catalyses the reaction N(tele)-phospho-L-histidyl/O-phospho-L-threonyl-[pyruvate, phosphate dikinase] + phosphate + H(+) = N(tele)-phospho-L-histidyl/L-threonyl-[pyruvate, phosphate dikinase] + diphosphate. Functionally, bifunctional serine/threonine kinase and phosphorylase involved in the regulation of the pyruvate, phosphate dikinase (PPDK) by catalyzing its phosphorylation/dephosphorylation. The polypeptide is Putative pyruvate, phosphate dikinase regulatory protein (Brucella melitensis biotype 2 (strain ATCC 23457)).